The following is a 288-amino-acid chain: Tryptophan 2,3-dioxygenase (288 aa).

Substrate contacts are provided by residues 57–61 (FIIQH), Tyr-119, and Arg-123. A heme-binding site is contributed by His-246. Thr-260 contacts substrate.

Belongs to the tryptophan 2,3-dioxygenase family. Homotetramer. Heme is required as a cofactor.

It carries out the reaction L-tryptophan + O2 = N-formyl-L-kynurenine. Its pathway is amino-acid degradation; L-tryptophan degradation via kynurenine pathway; L-kynurenine from L-tryptophan: step 1/2. Heme-dependent dioxygenase that catalyzes the oxidative cleavage of the L-tryptophan (L-Trp) pyrrole ring and converts L-tryptophan to N-formyl-L-kynurenine. Catalyzes the oxidative cleavage of the indole moiety. The chain is Tryptophan 2,3-dioxygenase from Pseudomonas aeruginosa (strain ATCC 15692 / DSM 22644 / CIP 104116 / JCM 14847 / LMG 12228 / 1C / PRS 101 / PAO1).